The following is a 361-amino-acid chain: Alanine racemase (361 aa).

The active-site Proton acceptor; specific for D-alanine is the K34. An N6-(pyridoxal phosphate)lysine modification is found at K34. Position 129 (R129) interacts with substrate. Catalysis depends on Y256, which acts as the Proton acceptor; specific for L-alanine. M304 lines the substrate pocket.

Belongs to the alanine racemase family. As to quaternary structure, homodimer. The cofactor is pyridoxal 5'-phosphate.

The enzyme catalyses L-alanine = D-alanine. The protein operates within amino-acid biosynthesis; D-alanine biosynthesis; D-alanine from L-alanine: step 1/1. In terms of biological role, catalyzes the interconversion of L-alanine and D-alanine. May also act on other amino acids. The protein is Alanine racemase (alr) of Corynebacterium glutamicum (strain ATCC 13032 / DSM 20300 / JCM 1318 / BCRC 11384 / CCUG 27702 / LMG 3730 / NBRC 12168 / NCIMB 10025 / NRRL B-2784 / 534).